Consider the following 477-residue polypeptide: Glutamate--tRNA ligase (477 aa).

Residues 8 to 18 (PSPTGTLHIGT) carry the 'HIGH' region motif. The 'KMSKS' region signature appears at 247 to 251 (KLSKR). Lysine 250 lines the ATP pocket.

This sequence belongs to the class-I aminoacyl-tRNA synthetase family. Glutamate--tRNA ligase type 1 subfamily. In terms of assembly, monomer.

Its subcellular location is the cytoplasm. The enzyme catalyses tRNA(Glu) + L-glutamate + ATP = L-glutamyl-tRNA(Glu) + AMP + diphosphate. In terms of biological role, catalyzes the attachment of glutamate to tRNA(Glu) in a two-step reaction: glutamate is first activated by ATP to form Glu-AMP and then transferred to the acceptor end of tRNA(Glu). This Parasynechococcus marenigrum (strain WH8102) protein is Glutamate--tRNA ligase.